The sequence spans 501 residues: Cytochrome P450 81F4 (501 aa).

K245 participates in a covalent cross-link: Glycyl lysine isopeptide (Lys-Gly) (interchain with G-Cter in ubiquitin). Residues I285 to T305 traverse the membrane as a helical segment. Residue C435 participates in heme binding.

This sequence belongs to the cytochrome P450 family. Heme serves as cofactor.

It localises to the membrane. It participates in secondary metabolite biosynthesis. Functionally, involved in indole glucosinolate biosynthesis. Catalyzes hydroxylation reactions of the glucosinolate indole ring. Converts indol-3-yl-methylglucosinolate (I3M) to 1-hydroxy-indol-3-yl-methylglucosinolate (1OH-I3M) intermediate. This hydroxy intermediates is converted to 1-methoxy-indol-3-yl-methylglucosinolate (1MO-I3M) by indole glucosinolate methyltransferase 1 and 2 (IGMT1 and IGMT2). The protein is Cytochrome P450 81F4 of Arabidopsis thaliana (Mouse-ear cress).